The following is a 257-amino-acid chain: Ciliary microtubule associated protein 1B (257 aa).

3 STPGR repeats span residues 103 to 129 (PGPGSYSPENATKATYLSPPAFTLSAR), 182 to 207 (PGPGTYQVVDPCVYKHKGPQYSMTGR), and 218 to 243 (PGPGAHYPEMVCFTRAKAPSFSFGIR).

This sequence belongs to the CIMAP family.

Its subcellular location is the cell projection. It localises to the cilium. The protein localises to the flagellum. This Danio rerio (Zebrafish) protein is Ciliary microtubule associated protein 1B (cimap1b).